Consider the following 252-residue polypeptide: Mitochondrial peculiar membrane protein 1 (252 aa).

Residues 230–252 form a disordered region; sequence TTTTSKGSSPQVKHKVVSVDEDN.

It is found in the mitochondrion membrane. The sequence is that of Mitochondrial peculiar membrane protein 1 (MPM1) from Saccharomyces cerevisiae (strain ATCC 204508 / S288c) (Baker's yeast).